The sequence spans 184 residues: DOMON domain-containing protein CBG21755 (184 aa).

An N-terminal signal peptide occupies residues 1 to 20 (MIVPISLLFLFLSFVPFSYS). Residues 28 to 145 (EVASMSWMVK…CVNWIVVPGG (118 aa)) enclose the DOMON domain. Asn49 is a glycosylation site (N-linked (GlcNAc...) asparagine).

It localises to the secreted. The polypeptide is DOMON domain-containing protein CBG21755 (Caenorhabditis briggsae).